Here is a 334-residue protein sequence, read N- to C-terminus: D-aspartate oxidase 1 (334 aa).

Aspartate 35, arginine 36, serine 43, glycine 307, and threonine 312 together coordinate FAD. A Microbody targeting signal motif is present at residues 332–334; that stretch reads SKL.

The protein belongs to the DAMOX/DASOX family. FAD serves as cofactor. As to expression, expressed in the intestinal cells, hypodermis and in unidentified cells in the head in adult hermaphrodites.

It localises to the peroxisome matrix. It carries out the reaction D-aspartate + O2 + H2O = oxaloacetate + H2O2 + NH4(+). The catalysed reaction is D-glutamate + O2 + H2O = H2O2 + 2-oxoglutarate + NH4(+). With respect to regulation, not inhibited by potassium bromide or thiolactomycin. Functionally, selectively catalyzes the oxidative deamination of acidic amino acids. May play a role in the egg-laying events and early development of the worm, in addition to quality control of the germ cells. The sequence is that of D-aspartate oxidase 1 (ddo-1) from Caenorhabditis elegans.